Here is a 95-residue protein sequence, read N- to C-terminus: Auxin-responsive protein SAUR27 (95 aa).

The protein belongs to the ARG7 family. In terms of assembly, interacts with PP2C-D1. In terms of tissue distribution, higher expression in thermo-responsive cultivars (e.g. cv. Alst-1, cv. Ang-0 and cv. Com-0) than in low thermo-responsive cultivars (e.g. cv. Dja-1, cv. El-0 and cv. Kon).

It localises to the cell membrane. Its function is as follows. Functions as a positive effector of cell expansion through modulation of auxin transport. Involved in thermo-responsiveness of plant architecture. Enhances plasma membrane H(+)-ATPase. This is Auxin-responsive protein SAUR27 from Arabidopsis thaliana (Mouse-ear cress).